Consider the following 255-residue polypeptide: 1-(5-phosphoribosyl)-5-[(5-phosphoribosylamino)methylideneamino] imidazole-4-carboxamide isomerase (255 aa).

Residue D8 is the Proton acceptor of the active site. Catalysis depends on D129, which acts as the Proton donor.

Belongs to the HisA/HisF family.

It is found in the cytoplasm. The enzyme catalyses 1-(5-phospho-beta-D-ribosyl)-5-[(5-phospho-beta-D-ribosylamino)methylideneamino]imidazole-4-carboxamide = 5-[(5-phospho-1-deoxy-D-ribulos-1-ylimino)methylamino]-1-(5-phospho-beta-D-ribosyl)imidazole-4-carboxamide. The protein operates within amino-acid biosynthesis; L-histidine biosynthesis; L-histidine from 5-phospho-alpha-D-ribose 1-diphosphate: step 4/9. This chain is 1-(5-phosphoribosyl)-5-[(5-phosphoribosylamino)methylideneamino] imidazole-4-carboxamide isomerase, found in Prochlorococcus marinus (strain MIT 9313).